A 739-amino-acid chain; its full sequence is Vascular cell adhesion protein 1 (739 aa).

The first 24 residues, 1–24 (MPVKMVAIFGASTVLWILFAVSQA), serve as a signal peptide directing secretion. Ig-like C2-type domains lie at 25 to 111 (FKIE…IQVD), 119 to 212 (PEIQ…KERE), 223 to 309 (PKNT…LIVQ), 312 to 397 (PFTV…KTIQ), 408 to 506 (EIEI…QTLY), 514 to 595 (PTIW…VELI), and 601 to 682 (KDIQ…RSLT). Topologically, residues 25-698 (FKIEISPEYK…ENNKDYFSPE (674 aa)) are extracellular. 5 disulfides stabilise this stretch: C47/C95, C52/C99, C137/C195, C246/C291, and C335/C383. N273 carries N-linked (GlcNAc...) asparagine glycosylation. N-linked (GlcNAc...) asparagine glycans are attached at residues N424, N531, N561, and N650. C534 and C579 form a disulfide bridge. A helical membrane pass occupies residues 699 to 720 (LLALYFASSLVIPAIGMIIYFA). Over 721 to 739 (RKANMKGSYSLVEAQKSKV) the chain is Cytoplasmic.

In terms of assembly, binds to ECMV-D capsid proteins and acts as a receptor for this virus. Post-translationally, cleaved by the metalloproteinase ADAM17 to generate the soluble form. Sialoglycoprotein. In terms of processing, ubiquitinated by TRIM65 via 'Lys-48'-linked ubiquitination; leading to proteasomal degradation. As to expression, expressed in aortic endothelial cells, with low expression in the descending thoracic aorta and the outer curvature of the aortic arch, where pulsatory shear stress exists, and high in the inner curvature of the aortic arch, where oscillatory shear stress prevails (at protein level). Expressed on inflamed vascular endothelium, as well as on macrophage-like and dendritic cell types in both normal and inflamed tissue.

The protein localises to the cell membrane. It is found in the secreted. Functionally, cell adhesion glycoprotein predominantly expressed on the surface of endothelial cells that plays an important role in immune surveillance and inflammation. Acts as a major regulator of leukocyte adhesion to the endothelium through interaction with different types of integrins. During inflammatory responses, binds ligands on the surface of activated endothelial cells to initiate the activation of calcium channels and the plasma membrane-associated small GTPase RAC1 leading to leukocyte transendothelial migration. Also serves as a quality-control checkpoint for entry into bone marrow by providing a 'don't-eat-me' stamping in the context of major histocompatibility complex (MHC) class-I presentation. The sequence is that of Vascular cell adhesion protein 1 (Vcam1) from Rattus norvegicus (Rat).